A 453-amino-acid chain; its full sequence is 3-phosphoshikimate 1-carboxyvinyltransferase (453 aa).

Positions 1–12 (MDVNVTSSTVRG) are enriched in polar residues. The tract at residues 1–21 (MDVNVTSSTVRGTTRAPPSKS) is disordered. 3-phosphoshikimate contacts are provided by K20, S21, and R25. K20 serves as a coordination point for phosphoenolpyruvate. Phosphoenolpyruvate is bound by residues G97 and R125. Residues S170, S171, Q172, S198, D330, and K357 each contribute to the 3-phosphoshikimate site. Q172 contacts phosphoenolpyruvate. D330 (proton acceptor) is an active-site residue. Phosphoenolpyruvate is bound by residues R361 and R404.

The protein belongs to the EPSP synthase family. Monomer.

The protein resides in the cytoplasm. The catalysed reaction is 3-phosphoshikimate + phosphoenolpyruvate = 5-O-(1-carboxyvinyl)-3-phosphoshikimate + phosphate. The protein operates within metabolic intermediate biosynthesis; chorismate biosynthesis. Functionally, catalyzes the transfer of the enolpyruvyl moiety of phosphoenolpyruvate (PEP) to the 5-hydroxyl of shikimate-3-phosphate (S3P) to produce enolpyruvyl shikimate-3-phosphate and inorganic phosphate. This chain is 3-phosphoshikimate 1-carboxyvinyltransferase, found in Halorubrum lacusprofundi (strain ATCC 49239 / DSM 5036 / JCM 8891 / ACAM 34).